Consider the following 167-residue polypeptide: Small ribosomal subunit protein uS5 (167 aa).

Positions 12-75 (LQEKLVQVNR…EAARRNMIQV (64 aa)) constitute an S5 DRBM domain.

Belongs to the universal ribosomal protein uS5 family. In terms of assembly, part of the 30S ribosomal subunit. Contacts proteins S4 and S8.

In terms of biological role, with S4 and S12 plays an important role in translational accuracy. Located at the back of the 30S subunit body where it stabilizes the conformation of the head with respect to the body. This chain is Small ribosomal subunit protein uS5, found in Alcanivorax borkumensis (strain ATCC 700651 / DSM 11573 / NCIMB 13689 / SK2).